The primary structure comprises 959 residues: Atromentin synthetase invA1 (959 aa).

Residues 59-466 form an adenylation (A) domain region; the sequence is DSSIQTKTFS…SGRIKETVIV (408 aa). The Carrier domain occupies 598–676; the sequence is TPQTETEQTL…SLANYIVALK (79 aa). A thiolation and peptide carrier (T) domain region spans residues 603–673; it reads TEQTLAAIYA…VVSSLANYIV (71 aa). Ser-635 carries the O-(pantetheine 4'-phosphoryl)serine modification. Residues 699-946 form a thioesterase (TE) domain region; the sequence is PIFMVHPGVG…LMDFDHVPGF (248 aa).

The protein belongs to the ATP-dependent AMP-binding enzyme family.

It functions in the pathway secondary metabolite biosynthesis. An L-tyrosine:2-oxoglutarate aminotransferase (probably invD) and atromentin synthetase invA1 catalyze consecutive steps to turn over L-tyrosine into atromentin, which represents the generic precursor molecule for the entire terphenylquinone and pulvinic acid family of pigments, which are widely distributed secondary metabolites in homobasidiomycetes. The first step catalyzed by the aminotransferase converts L-tyrosine in to 4-hydroxyphenylpyruvate (4-HPP). Adenylation of two 4-HPP monomers by the invA1 adenylation (A) domain, covalent tethering of the monomers as a thioester and oxoester onto the invA1 thiolation (T) and thioesterase (TE) domains, respectively, and symmetric C-C-bond formation between two monomers catalyzed by the invA1 TE domain leads to atromentin. The polypeptide is Atromentin synthetase invA1 (invA1) (Paxillus involutus (Naked brimcap)).